The primary structure comprises 162 residues: uncharacterized protein (162 aa).

Residues 7–27 form a helical membrane-spanning segment; it reads LGGVMLFAIVSLMVCGCMVVF.

The protein resides in the membrane. This is an uncharacterized protein from Methanocaldococcus jannaschii (strain ATCC 43067 / DSM 2661 / JAL-1 / JCM 10045 / NBRC 100440) (Methanococcus jannaschii).